The chain runs to 239 residues: Ribosomal RNA small subunit methyltransferase G (239 aa).

S-adenosyl-L-methionine is bound by residues Gly-76, Phe-81, 99–101, 128–129, and Arg-147; these read DSS and IE.

This sequence belongs to the methyltransferase superfamily. RNA methyltransferase RsmG family.

The protein resides in the cytoplasm. Its function is as follows. Specifically methylates the N7 position of a guanine in 16S rRNA. The sequence is that of Ribosomal RNA small subunit methyltransferase G from Prochlorococcus marinus subsp. pastoris (strain CCMP1986 / NIES-2087 / MED4).